We begin with the raw amino-acid sequence, 1872 residues long: E3 ubiquitin-protein ligase UBR2 (1872 aa).

The UBR-type zinc finger occupies 96 to 172; it reads TACTRLCFPS…DAFKCKNELN (77 aa). Lysine 709 is covalently cross-linked (Glycyl lysine isopeptide (Lys-Gly) (interchain with G-Cter in ubiquitin)). An interaction with UBC2 region spans residues 1134–1240; that stretch reads RYLMETAPHV…SSNTINSCCD (107 aa). The disordered stretch occupies residues 1203–1227; the sequence is NNSVDTSDISTPRTTSPSLSPTRIN. Over residues 1212–1225 the composition is skewed to low complexity; it reads STPRTTSPSLSPTR. Phosphoserine occurs at positions 1218 and 1222. The RING-type; atypical zinc finger occupies 1241–1362; sequence DDCVFCKMPK…GLIYCPVCNS (122 aa).

It belongs to the E3 ubiquitin-protein ligase UBR1-like family. In terms of assembly, interacts with MUB1, RPN4 and UBC2.

It is found in the cytoplasm. The catalysed reaction is S-ubiquitinyl-[E2 ubiquitin-conjugating enzyme]-L-cysteine + [acceptor protein]-L-lysine = [E2 ubiquitin-conjugating enzyme]-L-cysteine + N(6)-ubiquitinyl-[acceptor protein]-L-lysine.. It functions in the pathway protein modification; protein ubiquitination. In terms of biological role, E3 ubiquitin-protein ligase which probably functions outside the N-end rule pathway, since it lacks the residues essential for the degradation of N-end rule substrates. Mediates RPN4 ubiquitination and subsequent degradation. This is E3 ubiquitin-protein ligase UBR2 (UBR2) from Saccharomyces cerevisiae (strain ATCC 204508 / S288c) (Baker's yeast).